Consider the following 384-residue polypeptide: Odorant receptor 33c (384 aa).

Topologically, residues 1 to 35 (MVIIDSLSFYRPFWICMRLLVPTFFKDSSRPVQLY) are cytoplasmic. Residues 36 to 56 (VVLLHILVTLWFPLHLLLHLL) form a helical membrane-spanning segment. Residues 57–63 (LLPSTAE) are Extracellular-facing. The chain crosses the membrane as a helical span at residues 64 to 84 (FFKNLTMSLTCVACSLKHVAH). Residues 85–128 (LYHLPQIVEIESLIEQLDTFIASEQEHRYYRDHVHCHARRFTRC) lie on the Cytoplasmic side of the membrane. The chain crosses the membrane as a helical span at residues 129 to 149 (LYISFGMIYALFLFGVFVQVI). The Extracellular portion of the chain corresponds to 150-169 (SGNWELLYPAYFPFDLESNR). Residues 170–190 (FLGAVALGYQVFSMLVEGFQG) form a helical membrane-spanning segment. At 191 to 251 (LGNDTYTPLT…LVRFHNLVSR (61 aa)) the chain is on the cytoplasmic side. A helical membrane pass occupies residues 252–272 (TISEVQLVQLGGCGATLCIIV). The Extracellular segment spans residues 273–274 (SY). A helical membrane pass occupies residues 275–295 (MLFFVGDTISLVYYLVFFGVV). Residues 296–358 (CVQLFPSCYF…WIIKAGGLIE (63 aa)) are Cytoplasmic-facing. A helical transmembrane segment spans residues 359–379 (LNLNAFFATLKMAYSLFAVVV). Topologically, residues 380–384 (RAKGI) are extracellular.

It belongs to the insect chemoreceptor superfamily. Heteromeric odorant receptor channel (TC 1.A.69) family. Or2a subfamily. In terms of assembly, interacts with Orco. Complexes exist early in the endomembrane system in olfactory sensory neurons (OSNs), coupling these complexes to the conserved ciliary trafficking pathway. Expressed in the antenna and in a subset of 18 olfactory receptor neurons in the maxillary palp.

Its subcellular location is the cell membrane. Functionally, odorant receptor which mediates acceptance or avoidance behavior, depending on its substrates. The odorant receptor repertoire encodes a large collection of odor stimuli that vary widely in identity, intensity, and duration. May form a complex with Orco to form odorant-sensing units, providing sensitive and prolonged odorant signaling and calcium permeability. The polypeptide is Odorant receptor 33c (Or33c) (Drosophila melanogaster (Fruit fly)).